The chain runs to 200 residues: MKIILATQNKRKLDEFIELSKNSNYPINFVIKPLKEDIGEIEENGNSYFENALIKANAVFNYYKEPVLSDDSGLELPEFKEILGIYSSRFAGINATDKENRYKLLDYLKSKNITETSAKYVCVLVYIFNQGEALSFKGEWEGKIIVSDNLNLDTGFGYDPMFVPKEYTITVSEMSISEKNLISHRAKAVNQFLNFLKDKK.

7 to 12 (TQNKRK) contributes to the substrate binding site. Mg(2+)-binding residues include glutamate 42 and aspartate 71. The Proton acceptor role is filled by aspartate 71. Substrate contacts are provided by residues serine 72, 156–159 (FGYD), lysine 179, and 184–185 (HR).

Belongs to the HAM1 NTPase family. Homodimer. It depends on Mg(2+) as a cofactor.

The enzyme catalyses XTP + H2O = XMP + diphosphate + H(+). It carries out the reaction dITP + H2O = dIMP + diphosphate + H(+). The catalysed reaction is ITP + H2O = IMP + diphosphate + H(+). Its function is as follows. Pyrophosphatase that catalyzes the hydrolysis of nucleoside triphosphates to their monophosphate derivatives, with a high preference for the non-canonical purine nucleotides XTP (xanthosine triphosphate), dITP (deoxyinosine triphosphate) and ITP. Seems to function as a house-cleaning enzyme that removes non-canonical purine nucleotides from the nucleotide pool, thus preventing their incorporation into DNA/RNA and avoiding chromosomal lesions. This Malacoplasma penetrans (strain HF-2) (Mycoplasma penetrans) protein is dITP/XTP pyrophosphatase.